A 336-amino-acid chain; its full sequence is HTH-type transcriptional repressor PurR (336 aa).

Positions 2–56 (ATIKDVARLAGVSTTTVSHVINKTRFVAETTQEKVMEAVKQLNYAPSAVARSLKC) constitute an HTH lacI-type domain. Residues 4–23 (IKDVARLAGVSTTTVSHVIN) constitute a DNA-binding region (H-T-H motif). Residues 48–56 (SAVARSLKC) mediate DNA binding. Residues Phe73, Lys189, Phe220, and Asp274 each contribute to the hypoxanthine site.

In terms of assembly, homodimer.

Its pathway is purine metabolism; purine nucleotide biosynthesis [regulation]. Functionally, is the main repressor of the genes involved in the de novo synthesis of purine nucleotides, regulating purB, purC, purEK, purF, purHD, purL, purMN and guaBA expression. PurR is allosterically activated to bind its cognate DNA by binding the purine corepressors, hypoxanthine or guanine, thereby effecting transcription repression. The sequence is that of HTH-type transcriptional repressor PurR from Vibrio cholerae serotype O1 (strain ATCC 39315 / El Tor Inaba N16961).